A 236-amino-acid polypeptide reads, in one-letter code: Small ribosomal subunit protein uS5 (236 aa).

Residues 61-124 (ENQEILDIAL…NYAKLNIIEI (64 aa)) form the S5 DRBM domain.

Belongs to the universal ribosomal protein uS5 family. As to quaternary structure, part of the 30S ribosomal subunit. Contacts protein S4.

Functionally, with S4 and S12 plays an important role in translational accuracy. This Pyrococcus abyssi (strain GE5 / Orsay) protein is Small ribosomal subunit protein uS5.